We begin with the raw amino-acid sequence, 154 residues long: Aspartate carbamoyltransferase regulatory chain (154 aa).

Zn(2+) is bound by residues Cys-109, Cys-114, Cys-138, and Cys-141.

This sequence belongs to the PyrI family. Contains catalytic and regulatory chains. Zn(2+) serves as cofactor.

Involved in allosteric regulation of aspartate carbamoyltransferase. The chain is Aspartate carbamoyltransferase regulatory chain from Photorhabdus laumondii subsp. laumondii (strain DSM 15139 / CIP 105565 / TT01) (Photorhabdus luminescens subsp. laumondii).